Here is a 776-residue protein sequence, read N- to C-terminus: Glucocorticoid receptor (776 aa).

Positions 1–11 (MDSKESLTSPS) are enriched in polar residues. The disordered stretch occupies residues 1–25 (MDSKESLTSPSEEIPSSVHGQERGN). The interval 1-419 (MDSKESLTSP…LSAVGPPPKF (419 aa)) is modulating. Thr-8 is subject to Phosphothreonine. Arg-23 is subject to Omega-N-methylarginine. Residues Ser-45, Ser-113, and Ser-134 each carry the phosphoserine modification. The segment at 157–178 (PETPSDVSSEQQNLKGQTGTNG) is disordered. Polar residues predominate over residues 161-174 (SDVSSEQQNLKGQT). Ser-203, Ser-211, and Ser-226 each carry phosphoserine. A Glycyl lysine isopeptide (Lys-Gly) (interchain with G-Cter in SUMO2) cross-link involves residue Lys-258. Residue Ser-267 is modified to Phosphoserine. Glycyl lysine isopeptide (Lys-Gly) (interchain with G-Cter in SUMO); alternate cross-links involve residues Lys-277 and Lys-293. Glycyl lysine isopeptide (Lys-Gly) (interchain with G-Cter in SUMO2); alternate cross-links involve residues Lys-277 and Lys-293. Phosphoserine occurs at positions 307 and 404. A DNA-binding region (nuclear receptor) is located at residues 417 to 492 (PKFCLVCSDE…AGMNLEARKT (76 aa)). A Glycyl lysine isopeptide (Lys-Gly) (interchain with G-Cter in ubiquitin) cross-link involves residue Lys-418. 2 consecutive NR C4-type zinc fingers follow at residues 420-440 (CLVC…CGSC) and 456-480 (CAGR…YRKC). An N6-acetyllysine mark is found at Lys-479, Lys-491, Lys-493, and Lys-494. Residues 484-776 (GMNLEARKTK…NIKKLLFHQK (293 aa)) form an interaction with CLOCK region. Residues 486–522 (NLEARKTKKKIKGIQQTTTGISQETPENSANKTIVPA) form a hinge region. The 235-residue stretch at 523–757 (TLPQLTPTPV…FPEMLAEIIT (235 aa)) folds into the NR LBD domain. The interaction with CRY1 stretch occupies residues 531 to 696 (PVSLLEVIEP…EIRMTYIKEL (166 aa)). Residue Lys-702 forms a Glycyl lysine isopeptide (Lys-Gly) (interchain with G-Cter in SUMO) linkage.

It belongs to the nuclear hormone receptor family. NR3 subfamily. Heteromultimeric cytoplasmic complex with HSP90AA1, HSPA1A/HSPA1B, and FKBP5 or another immunophilin such as PPID, STIP1, or the immunophilin homolog PPP5C. Upon ligand binding FKBP5 dissociates from the complex and FKBP4 takes its place, thereby linking the complex to dynein and mediating transport to the nucleus, where the complex dissociates. Probably forms a complex composed of chaperones HSP90 and HSP70, co-chaperones CDC37, PPP5C, TSC1 and client protein TSC2, CDK4, AKT, RAF1 and NR3C1; this complex does not contain co-chaperones STIP1/HOP and PTGES3/p23. Directly interacts with UNC45A. Binds to DNA as a homodimer, and as heterodimer with NR3C2 or the retinoid X receptor. Binds STAT5A and STAT5B homodimers and heterodimers. Interacts with NRIP1, POU2F1, POU2F2 and TRIM28. Interacts with several coactivator complexes, including the SMARCA4 complex, CREBBP/EP300, TADA2L (Ada complex) and p160 coactivators such as NCOA2 and NCOA6. Interaction with BAG1 inhibits transactivation. Interacts with HEXIM1 and TGFB1I1. Interacts with NCOA1. Interacts with NCOA3, SMARCA4, SMARCC1, SMARCD1, and SMARCE1. Interacts with CLOCK, CRY1 and CRY2 in a ligand-dependent fashion. Interacts with CIART. Interacts with RWDD3. Interacts with UBE2I/UBC9 and this interaction is enhanced in the presence of RWDD3. Interacts with GRIP1. Interacts with NR4A3 (via nuclear receptor DNA-binding domain), represses transcription activity of NR4A3 on the POMC promoter Nur response element (NurRE). Directly interacts with PNRC2 to attract and form a complex with UPF1 and DCP1A; the interaction leads to rapid mRNA degradation. Interacts with GSK3B. Interacts with FNIP1 and FNIP2. Interacts (via C-terminus) with NR3C1 (via C-terminus). Interacts with MCM3AP. Interacts (via domain NR LBD) with HSP90AA1 and HSP90AB1. In the absence of hormonal ligand, interacts with TACC1. Acetylation by CLOCK reduces its binding to glucocorticoid response elements and its transcriptional activity. In terms of processing, increased proteasome-mediated degradation in response to glucocorticoids. Post-translationally, phosphorylated in the absence of hormone; becomes hyperphosphorylated in the presence of glucocorticoid. The Ser-203, Ser-226 and Ser-404-phosphorylated forms are mainly cytoplasmic, and the Ser-211-phosphorylated form is nuclear. Phosphorylation at Ser-211 increases transcriptional activity. Phosphorylation at Ser-203, Ser-226 and Ser-404 decreases signaling capacity. Phosphorylation at Ser-404 may protect from glucocorticoid-induced apoptosis. Phosphorylation at Ser-203 and Ser-211 is not required in regulation of chromosome segregation. May be dephosphorylated by PPP5C, attenuates NR3C1 action. Sumoylation at Lys-277 and Lys-293 negatively regulates its transcriptional activity. Sumoylation at Lys-702 positively regulates its transcriptional activity in the presence of RWDD3. Sumoylation at Lys-277 and Lys-293 is dispensable whereas sumoylation at Lys-702 is critical for the stimulatory effect of RWDD3 on its transcriptional activity. Heat shock increases sumoylation in a RWDD3-dependent manner. In terms of processing, ubiquitinated by UBR5, leading to its degradation: UBR5 specifically recognizes and binds ligand-bound NR3C1 when it is not associated with coactivators (NCOAs). In presence of NCOAs, the UBR5-degron is not accessible, preventing its ubiquitination and degradation.

Its subcellular location is the cytoplasm. The protein resides in the nucleus. It is found in the mitochondrion. The protein localises to the cytoskeleton. It localises to the spindle. Its subcellular location is the microtubule organizing center. The protein resides in the centrosome. It is found in the chromosome. The protein localises to the nucleoplasm. Functionally, receptor for glucocorticoids (GC). Has a dual mode of action: as a transcription factor that binds to glucocorticoid response elements (GRE), both for nuclear and mitochondrial DNA, and as a modulator of other transcription factors. Affects inflammatory responses, cellular proliferation and differentiation in target tissues. Involved in chromatin remodeling. Plays a role in rapid mRNA degradation by binding to the 5' UTR of target mRNAs and interacting with PNRC2 in a ligand-dependent manner which recruits the RNA helicase UPF1 and the mRNA-decapping enzyme DCP1A, leading to RNA decay. Could act as a coactivator for STAT5-dependent transcription upon growth hormone (GH) stimulation and could reveal an essential role of hepatic GR in the control of body growth. Mediates glucocorticoid-induced apoptosis. Promotes accurate chromosome segregation during mitosis. May act as a tumor suppressor. May play a negative role in adipogenesis through the regulation of lipolytic and antilipogenic gene expression. This is Glucocorticoid receptor (NR3C1) from Tupaia belangeri (Common tree shrew).